Here is a 140-residue protein sequence, read N- to C-terminus: Truncated tyrosine phosphatase D1 (140 aa).

In terms of domain architecture, Tyrosine-protein phosphatase spans Met-1–Lys-140.

Belongs to the protein-tyrosine phosphatase family.

This Microplitis demolitor bracovirus (isolate Webb) (MdBV) protein is Truncated tyrosine phosphatase D1 (D1).